Consider the following 359-residue polypeptide: 3-dehydroquinate synthase (359 aa).

NAD(+) contacts are provided by residues 71-76 (DGEQYK), 105-109 (GVIGD), 129-130 (TT), Lys142, Lys151, and 169-172 (CLKT). Positions 184, 247, and 264 each coordinate Zn(2+).

This sequence belongs to the sugar phosphate cyclases superfamily. Dehydroquinate synthase family. Co(2+) is required as a cofactor. It depends on Zn(2+) as a cofactor. NAD(+) serves as cofactor.

The protein resides in the cytoplasm. It carries out the reaction 7-phospho-2-dehydro-3-deoxy-D-arabino-heptonate = 3-dehydroquinate + phosphate. It participates in metabolic intermediate biosynthesis; chorismate biosynthesis; chorismate from D-erythrose 4-phosphate and phosphoenolpyruvate: step 2/7. Functionally, catalyzes the conversion of 3-deoxy-D-arabino-heptulosonate 7-phosphate (DAHP) to dehydroquinate (DHQ). The chain is 3-dehydroquinate synthase from Shewanella amazonensis (strain ATCC BAA-1098 / SB2B).